We begin with the raw amino-acid sequence, 128 residues long: Myelin basic protein (128 aa).

Disordered stretches follow at residues alanine 1–threonine 24 and threonine 82–arginine 128. Basic and acidic residues-rich tracts occupy residues glycine 11 to alanine 23 and lysine 96 to glycine 107.

Belongs to the myelin basic protein family. Post-translationally, the N-terminus is blocked.

The protein localises to the myelin membrane. This protein may function to maintain proper structure of myelin. This is Myelin basic protein (MBP) from Carcharhinus obscurus (Dusky shark).